The following is a 2289-amino-acid chain: Protein Ycf2 (2289 aa).

1643-1650 is a binding site for ATP; the sequence is GSIGTGRS.

The protein belongs to the Ycf2 family.

Its subcellular location is the plastid. It localises to the chloroplast stroma. Its function is as follows. Probable ATPase of unknown function. Its presence in a non-photosynthetic plant (Epifagus virginiana) and experiments in tobacco indicate that it has an essential function which is probably not related to photosynthesis. This is Protein Ycf2 from Capsella bursa-pastoris (Shepherd's purse).